Here is a 187-residue protein sequence, read N- to C-terminus: Large ribosomal subunit protein uL6 (187 aa).

Positions E151 to K170 are disordered.

This sequence belongs to the universal ribosomal protein uL6 family. Part of the 50S ribosomal subunit.

In terms of biological role, this protein binds to the 23S rRNA, and is important in its secondary structure. It is located near the subunit interface in the base of the L7/L12 stalk, and near the tRNA binding site of the peptidyltransferase center. This Chloroflexus aurantiacus (strain ATCC 29366 / DSM 635 / J-10-fl) protein is Large ribosomal subunit protein uL6.